A 608-amino-acid chain; its full sequence is Protein trichome birefringence (608 aa).

Residues 38-58 form a helical; Signal-anchor for type II membrane protein membrane-spanning segment; that stretch reads TFAYAFVITFVSFTLFFAFSP. 2 stretches are compositionally biased toward polar residues: residues 101-137 and 145-203; these read STKPTNRSSDATDSLSVNATSPPLNSNSKNGTLQTPA and AKNT…TSPA. Residues 101 to 236 form a disordered region; that stretch reads STKPTNRSSD…TPKKQTKTVD (136 aa). Residues 215–227 are compositionally biased toward low complexity; that stretch reads TNSSSNSSTASST. The GDS motif signature appears at 328-330; sequence GDS. Residues 573–587 carry the DCXHWCLPGXXDXWN motif motif; it reads DCSHWCLPGVPDSWN.

This sequence belongs to the PC-esterase family. TBL subfamily. As to expression, expressed in leaf vasculature, growing part of the root, expanding inflorescence stems and trichomes.

The protein localises to the membrane. Functionally, required during cellulose deposition. May act as a bridging protein that binds pectin and other cell wall polysaccharides. Probably involved in maintaining esterification of pectins. May be involved in the specific O-acetylation of cell wall polymers. The chain is Protein trichome birefringence (TBR) from Arabidopsis thaliana (Mouse-ear cress).